Here is a 260-residue protein sequence, read N- to C-terminus: Hydroxyethylthiazole kinase (260 aa).

M38 serves as a coordination point for substrate. Residues R114 and T159 each contribute to the ATP site. G186 contacts substrate.

It belongs to the Thz kinase family. Mg(2+) serves as cofactor.

The catalysed reaction is 5-(2-hydroxyethyl)-4-methylthiazole + ATP = 4-methyl-5-(2-phosphooxyethyl)-thiazole + ADP + H(+). Its pathway is cofactor biosynthesis; thiamine diphosphate biosynthesis; 4-methyl-5-(2-phosphoethyl)-thiazole from 5-(2-hydroxyethyl)-4-methylthiazole: step 1/1. Functionally, catalyzes the phosphorylation of the hydroxyl group of 4-methyl-5-beta-hydroxyethylthiazole (THZ). This is Hydroxyethylthiazole kinase from Helicobacter pylori (strain HPAG1).